The sequence spans 418 residues: 3-deoxy-D-manno-octulosonic acid transferase (418 aa).

The helical; Signal-anchor transmembrane segment at Phe-7–Gly-27 threads the bilayer. The active-site Proton acceptor is Glu-60. CMP-binding positions include Pro-264–Arg-265, Phe-305–Glu-307, and Asn-330–Glu-333.

The protein belongs to the glycosyltransferase group 1 family. Glycosyltransferase 30 subfamily.

It localises to the cell inner membrane. It carries out the reaction lipid IVA (E. coli) + CMP-3-deoxy-beta-D-manno-octulosonate = alpha-Kdo-(2-&gt;6)-lipid IVA (E. coli) + CMP + H(+). The protein operates within bacterial outer membrane biogenesis; LPS core biosynthesis. Involved in lipopolysaccharide (LPS) biosynthesis. Catalyzes the transfer of 3-deoxy-D-manno-octulosonate (Kdo) residue(s) from CMP-Kdo to lipid IV(A), the tetraacyldisaccharide-1,4'-bisphosphate precursor of lipid A. The chain is 3-deoxy-D-manno-octulosonic acid transferase (waaA) from Rickettsia bellii (strain RML369-C).